Consider the following 297-residue polypeptide: N-acetylneuraminate lyase (297 aa).

Ser-47 and Thr-48 together coordinate aceneuramate. The active-site Proton donor is the Tyr-137. The Schiff-base intermediate with substrate role is filled by Lys-165. Residues Thr-167, Gly-189, Asp-191, Glu-192, and Ser-208 each contribute to the aceneuramate site.

This sequence belongs to the DapA family. NanA subfamily. In terms of assembly, homotetramer.

It is found in the cytoplasm. The enzyme catalyses aceneuramate = aldehydo-N-acetyl-D-mannosamine + pyruvate. It functions in the pathway amino-sugar metabolism; N-acetylneuraminate degradation; D-fructose 6-phosphate from N-acetylneuraminate: step 1/5. Functionally, catalyzes the reversible aldol cleavage of N-acetylneuraminic acid (sialic acid; Neu5Ac) to form pyruvate and N-acetylmannosamine (ManNAc) via a Schiff base intermediate. This Escherichia coli O139:H28 (strain E24377A / ETEC) protein is N-acetylneuraminate lyase.